The following is a 552-amino-acid chain: MEALIVFIVLSVSGAFAYKCSYERLWFKVGSLFDIISTSSKKNVIPLASKMEVGSNEDVSSMGNFINKFYTEYSLPSHKVLQSLRVLFSLAMMTYTVTIEIILWQIKVAGMDKEVTFITTWVWPLTAIMLSFILILFQPFFIIISLLNKFYNDKFDIDRLIIVTCIILSTLIALLSYINIGPFQYTKNILTRLSIGGVTVMASLSGLATVSSLYYNFLVIWHKFRNTPMSDPSFRNINNSNNNSKSLLWTTDAYIEEKIQDYEHNIEQNVQILRSLEEEVGENSTFKAELMEKIAWYQLELGKLEALLQQSPQVRTFKKAFEVGFIIYCLHKLIITFLKRIPYIIYHSLKYPDDYDYENFSENAASDPLAITIANILDFSFFRFNYQHDLDSLTKQISLFLSISLFLCCLSAVNTTISYVVTLLPIKFQILALFAMQNDDTANVLPEYTNNSSYKGKKRNYSQEQKGISLIKNLVVSELTGVYVLATTLMVRSHLPFEVSQRLKELLGGKFTVPNIVIDSWFDEVYAFACVFTFICIRIAERKLSTKKVSVE.

4 consecutive transmembrane segments (helical) span residues 127–147 (AIMLSFILILFQPFFIIISLL), 160–180 (LIIVTCIILSTLIALLSYINI), 393–413 (LTKQISLFLSISLFLCCLSAV), and 517–537 (VIDSWFDEVYAFACVFTFICI).

It localises to the membrane. This is an uncharacterized protein from Saccharomyces cerevisiae (strain ATCC 204508 / S288c) (Baker's yeast).